We begin with the raw amino-acid sequence, 525 residues long: GMP synthase [glutamine-hydrolyzing] (525 aa).

Residues 8 to 207 (KILILDFGSQ…ALDICGCAAN (200 aa)) enclose the Glutamine amidotransferase type-1 domain. C85 functions as the Nucleophile in the catalytic mechanism. Catalysis depends on residues H181 and E183. The GMPS ATP-PPase domain occupies 208 to 400 (WKPSSIIEDA…LGLPYNMLYR (193 aa)). 235–241 (SGGVDSS) lines the ATP pocket.

Homodimer.

The enzyme catalyses XMP + L-glutamine + ATP + H2O = GMP + L-glutamate + AMP + diphosphate + 2 H(+). The protein operates within purine metabolism; GMP biosynthesis; GMP from XMP (L-Gln route): step 1/1. Functionally, catalyzes the synthesis of GMP from XMP. This is GMP synthase [glutamine-hydrolyzing] from Shewanella sp. (strain MR-7).